We begin with the raw amino-acid sequence, 37 residues long: Large ribosomal subunit protein bL36 (37 aa).

The protein belongs to the bacterial ribosomal protein bL36 family.

This is Large ribosomal subunit protein bL36 from Nocardia farcinica (strain IFM 10152).